The sequence spans 98 residues: Defensin-A1 (98 aa).

The signal sequence occupies residues 1-19 (MQTLSFLLALLFLVAQTPA). A propeptide spanning residues 20–62 (QPTGEGEKGGTIQEPEATEAQDTAAVLMAAGAADGDDSDTKQL) is cleaved from the precursor. 3 disulfides stabilise this stretch: Cys67–Cys94, Cys69–Cys83, and Cys73–Cys93. Residues 97 to 98 (IK) constitute a propeptide that is removed on maturation.

Belongs to the alpha-defensin family. As to expression, highly expressed in intestine, and expressed at lower levels in lung and spleen.

The protein localises to the secreted. Its function is as follows. Has antimicrobial activity. In Ornithorhynchus anatinus (Duckbill platypus), this protein is Defensin-A1.